The sequence spans 219 residues: MSESTLHVRYLGKQDYESVWHAMQDYTDNRDASSPDQLWIVEHPPVFTQGQAGKSEHILNPGDIPVIQVDRGGQVTYHGPGQLVAYPLINIKRLKIGVRQLVTDIENSIVQMLEGYQVKAYAKADAPGVYVDERKVASLGLRIRKGCSFHGLALNVDMDMSPFQRINPCGYAGLEMVQCKQLGGPQTVEEAGERLVKTFSHNLGYQNLIHHQGLSESYE.

Positions 32-207 constitute a BPL/LPL catalytic domain; it reads ASSPDQLWIV…TFSHNLGYQN (176 aa). Residues 71–78, 138–140, and 151–153 contribute to the substrate site; these read RGGQVTYH, SLG, and GLA. The active-site Acyl-thioester intermediate is Cys169.

Belongs to the LipB family.

It is found in the cytoplasm. It carries out the reaction octanoyl-[ACP] + L-lysyl-[protein] = N(6)-octanoyl-L-lysyl-[protein] + holo-[ACP] + H(+). Its pathway is protein modification; protein lipoylation via endogenous pathway; protein N(6)-(lipoyl)lysine from octanoyl-[acyl-carrier-protein]: step 1/2. In terms of biological role, catalyzes the transfer of endogenously produced octanoic acid from octanoyl-acyl-carrier-protein onto the lipoyl domains of lipoate-dependent enzymes. Lipoyl-ACP can also act as a substrate although octanoyl-ACP is likely to be the physiological substrate. The sequence is that of Octanoyltransferase from Shewanella sediminis (strain HAW-EB3).